The following is a 304-amino-acid chain: Polyisoprenyl-teichoic acid--peptidoglycan teichoic acid transferase TagU (304 aa).

Topologically, residues 1–4 are cytoplasmic; sequence MKKK. A helical; Signal-anchor for type II membrane protein transmembrane segment spans residues 5–25; the sequence is ILFWILGIIGILIIGGGAYAY. Topologically, residues 26-304 are extracellular; the sequence is SIYSSVSKTL…KLRAHLEVTK (279 aa).

Belongs to the LytR/CpsA/Psr (LCP) family.

It localises to the cell membrane. The protein operates within cell wall biogenesis. Functionally, may catalyze the final step in cell wall teichoic acid biosynthesis, the transfer of the anionic cell wall polymers (APs) from their lipid-linked precursor to the cell wall peptidoglycan (PG). The sequence is that of Polyisoprenyl-teichoic acid--peptidoglycan teichoic acid transferase TagU from Bacillus cereus (strain ATCC 14579 / DSM 31 / CCUG 7414 / JCM 2152 / NBRC 15305 / NCIMB 9373 / NCTC 2599 / NRRL B-3711).